A 410-amino-acid polypeptide reads, in one-letter code: Ribose 1,5-bisphosphate phosphokinase PhnN (410 aa).

Residues 1–220 (MRYAVYLAPP…VWLLMAGSTS (220 aa)) form a unknown region. A ribose 1,5-bisphosphokinase region spans residues 221-410 (MRTETGQLIY…SHCHQPITAL (190 aa)). An ATP-binding site is contributed by 233-240 (GPSGAGKD).

It in the C-terminal section; belongs to the ribose 1,5-bisphosphokinase family.

It carries out the reaction alpha-D-ribose 1,5-bisphosphate + ATP = 5-phospho-alpha-D-ribose 1-diphosphate + ADP. The protein operates within metabolic intermediate biosynthesis; 5-phospho-alpha-D-ribose 1-diphosphate biosynthesis; 5-phospho-alpha-D-ribose 1-diphosphate from D-ribose 5-phosphate (route II): step 3/3. Catalyzes the phosphorylation of ribose 1,5-bisphosphate to 5-phospho-D-ribosyl alpha-1-diphosphate (PRPP). The chain is Ribose 1,5-bisphosphate phosphokinase PhnN (phnN) from Laribacter hongkongensis (strain HLHK9).